The chain runs to 412 residues: GTPase Obg (412 aa).

One can recognise an Obg domain in the interval 1-159; that stretch reads MKFLDQAKIF…RWIWLRLKMI (159 aa). The 168-residue stretch at 160 to 327 folds into the OBG-type G domain; sequence ADAGLVGLPN…ILARLFTHIR (168 aa). Residues 166–173, 191–195, 212–215, 279–282, and 308–310 each bind GTP; these read GLPNAGKS, FTTLH, DIPG, NKCD, and SGV. The Mg(2+) site is built by serine 173 and threonine 193. The tract at residues 335 to 412 is disordered; it reads AVPAASPIFG…ADDEEDDAEE (78 aa). The segment covering 385–412 has biased composition (acidic residues); it reads NDGDEVDEDYDDEDLEEVADDEEDDAEE.

The protein belongs to the TRAFAC class OBG-HflX-like GTPase superfamily. OBG GTPase family. In terms of assembly, monomer. It depends on Mg(2+) as a cofactor.

The protein resides in the cytoplasm. Its function is as follows. An essential GTPase which binds GTP, GDP and possibly (p)ppGpp with moderate affinity, with high nucleotide exchange rates and a fairly low GTP hydrolysis rate. Plays a role in control of the cell cycle, stress response, ribosome biogenesis and in those bacteria that undergo differentiation, in morphogenesis control. The protein is GTPase Obg of Paramagnetospirillum magneticum (strain ATCC 700264 / AMB-1) (Magnetospirillum magneticum).